Reading from the N-terminus, the 297-residue chain is Nucleotide-binding protein BMA10229_A1510 (297 aa).

Residue 8–15 coordinates ATP; it reads GISGSGKS. A GTP-binding site is contributed by 57-60; it reads DARS.

It belongs to the RapZ-like family.

Functionally, displays ATPase and GTPase activities. This is Nucleotide-binding protein BMA10229_A1510 from Burkholderia mallei (strain NCTC 10229).